The chain runs to 327 residues: Methionyl-tRNA formyltransferase (327 aa).

Residue 121 to 124 participates in (6S)-5,6,7,8-tetrahydrofolate binding; that stretch reads SLLP.

This sequence belongs to the Fmt family.

It carries out the reaction L-methionyl-tRNA(fMet) + (6R)-10-formyltetrahydrofolate = N-formyl-L-methionyl-tRNA(fMet) + (6S)-5,6,7,8-tetrahydrofolate + H(+). Attaches a formyl group to the free amino group of methionyl-tRNA(fMet). The formyl group appears to play a dual role in the initiator identity of N-formylmethionyl-tRNA by promoting its recognition by IF2 and preventing the misappropriation of this tRNA by the elongation apparatus. This is Methionyl-tRNA formyltransferase from Burkholderia mallei (strain ATCC 23344).